A 178-amino-acid polypeptide reads, in one-letter code: 5,6,7,8-tetrahydromethanopterin hydro-lyase (178 aa).

Catalysis depends on His33, which acts as the Proton donor. Residues Asp35, Leu64, Lys82, Thr84, and Gln99 each contribute to the substrate site.

This sequence belongs to the formaldehyde-activating enzyme family.

The protein resides in the cytoplasm. The enzyme catalyses 5,6,7,8-tetrahydromethanopterin + formaldehyde = 5,10-methylenetetrahydromethanopterin + H2O. In terms of biological role, catalyzes the condensation of formaldehyde with tetrahydromethanopterin (H(4)MPT) to 5,10-methylenetetrahydromethanopterin. In Methanosarcina barkeri (strain Fusaro / DSM 804), this protein is 5,6,7,8-tetrahydromethanopterin hydro-lyase (faeA).